Reading from the N-terminus, the 365-residue chain is tRNA-specific 2-thiouridylase MnmA (365 aa).

Residues 12 to 19 and M38 each bind ATP; that span reads AMSGGVDS. C108 (nucleophile) is an active-site residue. Residues C108 and C206 are joined by a disulfide bond. G132 provides a ligand contact to ATP. The tract at residues 156 to 158 is interaction with tRNA; it reads KDQ. The Cysteine persulfide intermediate role is filled by C206. Residues 312–313 form an interaction with tRNA region; the sequence is RY.

Belongs to the MnmA/TRMU family.

Its subcellular location is the cytoplasm. The catalysed reaction is S-sulfanyl-L-cysteinyl-[protein] + uridine(34) in tRNA + AH2 + ATP = 2-thiouridine(34) in tRNA + L-cysteinyl-[protein] + A + AMP + diphosphate + H(+). In terms of biological role, catalyzes the 2-thiolation of uridine at the wobble position (U34) of tRNA, leading to the formation of s(2)U34. The polypeptide is tRNA-specific 2-thiouridylase MnmA (Carboxydothermus hydrogenoformans (strain ATCC BAA-161 / DSM 6008 / Z-2901)).